The sequence spans 108 residues: Urease subunit beta (108 aa).

This sequence belongs to the urease beta subunit family. In terms of assembly, heterotrimer of UreA (gamma), UreB (beta) and UreC (alpha) subunits. Three heterotrimers associate to form the active enzyme.

Its subcellular location is the cytoplasm. The catalysed reaction is urea + 2 H2O + H(+) = hydrogencarbonate + 2 NH4(+). It participates in nitrogen metabolism; urea degradation; CO(2) and NH(3) from urea (urease route): step 1/1. The sequence is that of Urease subunit beta from Chromohalobacter salexigens (strain ATCC BAA-138 / DSM 3043 / CIP 106854 / NCIMB 13768 / 1H11).